The following is a 412-amino-acid chain: STAGA complex 65 subunit gamma (412 aa).

The disordered stretch occupies residues 81–107; sequence AQTQSQQQTEGVKAEESEPLPSCPGSP. S106 carries the post-translational modification Phosphoserine. K269 is covalently cross-linked (Glycyl lysine isopeptide (Lys-Gly) (interchain with G-Cter in SUMO2)). Residues S321 and S332 each carry the phosphoserine modification. Residues 364-412 form a disordered region; sequence EEPMSGMSEAGLPQSPDDSDSSYGSHSTDSLMGSSPVFNQRCRKRMRKI. The span at 384–393 shows a compositional bias: low complexity; sequence SSYGSHSTDS.

As to quaternary structure, component of the STAGA transcription coactivator-HAT complex, at least composed of SUPT3H, SUPT7L, GCN5L2, TAF5L, TAF6L, TADA3L, TAD1L, TAF10, TAF12 and TAF9. Sumoylated.

The protein resides in the nucleus. This chain is STAGA complex 65 subunit gamma (Supt7l), found in Mus musculus (Mouse).